Reading from the N-terminus, the 414-residue chain is Probable isoprenylcysteine alpha-carbonyl methylesterase ICME (414 aa).

The segment at 1 to 54 (MQPASPVSGDAGPVAEAVPPRGAPQVLVRRRSVPFSPDSPLAPGSRGGGERRST) is disordered. 2 helical membrane passes run 90–110 (LAALIIYAILLMPGFIRVGYY) and 145–165 (VVAFVTGGAWIIGYKAWGALL). Residues 151–153 (GGA) and 222–224 (QSA) each bind substrate. Active-site residues include Ser223, Asp323, and His355.

This sequence belongs to the AB hydrolase superfamily. Isoprenylcysteine methylesterase family.

It is found in the endoplasmic reticulum membrane. Its subcellular location is the golgi apparatus membrane. The catalysed reaction is [protein]-C-terminal S-[(2E,6E)-farnesyl]-L-cysteine methyl ester + H2O = [protein]-C-terminal S-[(2E,6E)-farnesyl]-L-cysteine + methanol + H(+). Functionally, catalyzes the demethylation of isoprenylcysteine methylesters. This Oryza sativa subsp. japonica (Rice) protein is Probable isoprenylcysteine alpha-carbonyl methylesterase ICME (IMCE).